The primary structure comprises 72 residues: SRY-related protein AES6 (72 aa).

The segment at residues 1–69 is a DNA-binding region (HMG box); the sequence is VKRPMNAFMV…KHMADYPDYK (69 aa).

It is found in the nucleus. The protein is SRY-related protein AES6 of Alligator mississippiensis (American alligator).